The following is a 536-amino-acid chain: Multifunctional cytochrome P450 monooxygenase af510 (536 aa).

Residues 4–24 form a helical membrane-spanning segment; that stretch reads ELSTLQLSCVAFVAFMAVLVF. 2 N-linked (GlcNAc...) asparagine glycosylation sites follow: Asn-210 and Asn-293. Cys-448 contributes to the heme binding site.

Belongs to the cytochrome P450 family. Heme serves as cofactor.

The protein localises to the membrane. The enzyme catalyses (+)-exo-beta-bergamotene + 2 reduced [NADPH--hemoprotein reductase] + 3 O2 = 5-dehydro-6-demethoxyfumagillol + 2 oxidized [NADPH--hemoprotein reductase] + 3 H2O + 2 H(+). It participates in secondary metabolite biosynthesis; terpenoid biosynthesis. Multifunctional cytochrome P450 monooxygenase; part of the gene cluster that mediates the biosynthesis of fumagillin, a meroterpenoid that has numerous biological activities including irreversible inhibition of human type 2 methionine aminopeptidase (METAP2). Within the pathway, the multifunctional cytochrome P450 monooxygenase af510 acts as a 2,4,6-trichlorophenol monooxygenase that first performs the C-H hydroxylation at the bridgehead C5 position to yield 5R-hydroxyl-beta-trans-bergamotene. Subsequently, a four electron oxidation initiated at C-9 coupled to cleavage of the cyclobutane C5-C8 bond of the bicyclo[3.1.1] core yields the epoxyketone intermediate 5-keto-cordycol. An additional epoxidation reaction also catalyzed by af510 then furnishes the characteristic bisepoxide ketone 5-keto-demethoxyfumagillol. The pathway begins with the conversion of farnesyl pyrophosphate (FPP) to beta-trans-bergamotene by the membrane-bound beta-trans-bergamotene synthase af520. The multifunctional cytochrome P450 monooxygenase af510 then converts beta-trans-bergamotene into 5-keto-demethoxyfumagillol via several oxydation steps. 5-keto-demethoxyfumagillol is then subjected to successive C-6 hydroxylation and O-methylation by the dioxygenase af480 and O-methyltransferase af390-400, respectively, to yield 5-keto-fumagillol, which is then stereoselectively reduced by the keto-reductase af490 to 5R-hydroxy-seco-sesquiterpene. The next step is the polyketide transferase af380-catalyzed transfer of a dodecapentaenoyl group synthesized by the polyketide synthase af370 onto 5R-hydroxy-seco-sesquiterpene which leads to the production of prefumagillin. Finally, oxidative cleavage by the monooxygenase af470 converts prefumagillin to fumagillin. This Aspergillus fumigatus (strain ATCC MYA-4609 / CBS 101355 / FGSC A1100 / Af293) (Neosartorya fumigata) protein is Multifunctional cytochrome P450 monooxygenase af510.